A 397-amino-acid chain; its full sequence is Argininosuccinate synthase (397 aa).

An ATP-binding site is contributed by 9 to 17 (AYSGGLDTS). An L-citrulline-binding site is contributed by tyrosine 87. Position 117 (glycine 117) interacts with ATP. Residues threonine 119, asparagine 123, and aspartate 124 each coordinate L-aspartate. Asparagine 123 contacts L-citrulline. Residues arginine 127, serine 175, serine 184, glutamate 257, and tyrosine 269 each coordinate L-citrulline.

This sequence belongs to the argininosuccinate synthase family. Type 1 subfamily. As to quaternary structure, homotetramer.

It localises to the cytoplasm. The enzyme catalyses L-citrulline + L-aspartate + ATP = 2-(N(omega)-L-arginino)succinate + AMP + diphosphate + H(+). It functions in the pathway amino-acid biosynthesis; L-arginine biosynthesis; L-arginine from L-ornithine and carbamoyl phosphate: step 2/3. In Dictyoglomus turgidum (strain DSM 6724 / Z-1310), this protein is Argininosuccinate synthase.